A 205-amino-acid polypeptide reads, in one-letter code: Small ribosomal subunit protein uS4 (205 aa).

Positions 1-46 (MSKRHSAKYKIDRRMGENLWGRPKSPVNSRSYGPGQHGQRRKSKVS) are disordered. Residues 94–154 (SRLDAIVYRA…EKSRNMALVL (61 aa)) enclose the S4 RNA-binding domain.

Belongs to the universal ribosomal protein uS4 family. Part of the 30S ribosomal subunit. Contacts protein S5. The interaction surface between S4 and S5 is involved in control of translational fidelity.

Its function is as follows. One of the primary rRNA binding proteins, it binds directly to 16S rRNA where it nucleates assembly of the body of the 30S subunit. In terms of biological role, with S5 and S12 plays an important role in translational accuracy. This chain is Small ribosomal subunit protein uS4, found in Caulobacter vibrioides (strain ATCC 19089 / CIP 103742 / CB 15) (Caulobacter crescentus).